Consider the following 221-residue polypeptide: Putative gene 53 protein (221 aa).

The protein is Putative gene 53 protein (53) of Bacillus phage SP01 (Bacteriophage SP01).